Consider the following 430-residue polypeptide: Small ribosomal subunit protein uS5m (430 aa).

Residues 108-128 (AGARKGRGKRTKRKRRKDLNR) form a disordered region. The segment covering 111 to 125 (RKGRGKRTKRKRRKD) has biased composition (basic residues). The 65-residue stretch at 218 to 282 (FDTRILEVRN…NRAVHYLHYI (65 aa)) folds into the S5 DRBM domain.

It belongs to the universal ribosomal protein uS5 family. In terms of assembly, component of the mitochondrial ribosome small subunit (28S) which comprises a 12S rRNA and about 30 distinct proteins.

It localises to the mitochondrion. This is Small ribosomal subunit protein uS5m (MRPS5) from Bos taurus (Bovine).